A 304-amino-acid chain; its full sequence is Cell division protein ZipA (304 aa).

The Periplasmic portion of the chain corresponds to M1–R5. The chain crosses the membrane as a helical span at residues L6–T26. The Cytoplasmic portion of the chain corresponds to S27–H304. The interval R31–K165 is disordered. The segment covering A121 to E132 has biased composition (basic and acidic residues). The segment covering A137 to P158 has biased composition (low complexity).

Belongs to the ZipA family. In terms of assembly, interacts with FtsZ via their C-terminal domains.

It localises to the cell inner membrane. Functionally, essential cell division protein that stabilizes the FtsZ protofilaments by cross-linking them and that serves as a cytoplasmic membrane anchor for the Z ring. Also required for the recruitment to the septal ring of downstream cell division proteins. This Erwinia tasmaniensis (strain DSM 17950 / CFBP 7177 / CIP 109463 / NCPPB 4357 / Et1/99) protein is Cell division protein ZipA.